The chain runs to 253 residues: uncharacterized protein (253 aa).

Residues isoleucine 17, serine 36, aspartate 62, asparagine 89, tyrosine 158, lysine 162, valine 191, and threonine 193 each contribute to the NADP(+) site. The active-site Proton donor is the tyrosine 158. Lysine 162 serves as the catalytic Lowers pKa of active site Tyr.

Belongs to the short-chain dehydrogenases/reductases (SDR) family.

It is found in the cytoplasm. Its subcellular location is the nucleus. This is an uncharacterized protein from Schizosaccharomyces pombe (strain 972 / ATCC 24843) (Fission yeast).